The sequence spans 39 residues: Photosystem II reaction center protein L (39 aa).

Residues 18–38 form a helical membrane-spanning segment; it reads SLYLGLLFVFVTGVLMSSYFF.

The protein belongs to the PsbL family. As to quaternary structure, PSII is composed of 1 copy each of membrane proteins PsbA, PsbB, PsbC, PsbD, PsbE, PsbF, PsbH, PsbI, PsbJ, PsbK, PsbL, PsbM, PsbT, PsbX, PsbY, PsbZ, Psb30/Ycf12, peripheral proteins PsbO, CyanoQ (PsbQ), PsbU, PsbV and a large number of cofactors. It forms dimeric complexes.

It localises to the cellular thylakoid membrane. Functionally, one of the components of the core complex of photosystem II (PSII). PSII is a light-driven water:plastoquinone oxidoreductase that uses light energy to abstract electrons from H(2)O, generating O(2) and a proton gradient subsequently used for ATP formation. It consists of a core antenna complex that captures photons, and an electron transfer chain that converts photonic excitation into a charge separation. This subunit is found at the monomer-monomer interface and is required for correct PSII assembly and/or dimerization. The polypeptide is Photosystem II reaction center protein L (Synechococcus sp. (strain CC9605)).